Consider the following 842-residue polypeptide: Protein P (842 aa).

The tract at residues 1-177 is terminal protein domain (TP); it reads MPLSYQHFRR…FCGSPYSWEQ (177 aa). The segment at 178–345 is spacer; that stretch reads ELHHGAFLDG…YCLTHLVNLL (168 aa). A disordered region spans residues 186 to 273; the sequence is DGPSRMGEES…AKNIASRSAS (88 aa). The span at 223 to 239 shows a compositional bias: polar residues; sequence GPQSQQRPLDGSQQGRS. The tract at residues 346–689 is polymerase/reverse transcriptase domain (RT); that stretch reads EDWGPCTEHG…YLNLYPVARQ (344 aa). Positions 356–599 constitute a Reverse transcriptase domain; the sequence is RHHIRIPRTP…YSLNFMGYVI (244 aa). D428, D550, and D551 together coordinate Mg(2+).

Belongs to the hepadnaviridae P protein family.

The enzyme catalyses DNA(n) + a 2'-deoxyribonucleoside 5'-triphosphate = DNA(n+1) + diphosphate. The catalysed reaction is Endonucleolytic cleavage to 5'-phosphomonoester.. Its activity is regulated as follows. Activated by host HSP70 and HSP40 in vitro to be able to bind the epsilon loop of the pgRNA. Because deletion of the RNase H region renders the protein partly chaperone-independent, the chaperones may be needed indirectly to relieve occlusion of the RNA-binding site by this domain. Inhibited by several reverse-transcriptase inhibitors: Lamivudine, Adefovir and Entecavir. Multifunctional enzyme that converts the viral RNA genome into dsDNA in viral cytoplasmic capsids. This enzyme displays a DNA polymerase activity that can copy either DNA or RNA templates, and a ribonuclease H (RNase H) activity that cleaves the RNA strand of RNA-DNA heteroduplexes in a partially processive 3'- to 5'-endonucleasic mode. Neo-synthesized pregenomic RNA (pgRNA) are encapsidated together with the P protein, and reverse-transcribed inside the nucleocapsid. Initiation of reverse-transcription occurs first by binding the epsilon loop on the pgRNA genome, and is initiated by protein priming, thereby the 5'-end of (-)DNA is covalently linked to P protein. Partial (+)DNA is synthesized from the (-)DNA template and generates the relaxed circular DNA (RC-DNA) genome. After budding and infection, the RC-DNA migrates in the nucleus, and is converted into a plasmid-like covalently closed circular DNA (cccDNA). The activity of P protein does not seem to be necessary for cccDNA generation, and is presumably released from (+)DNA by host nuclear DNA repair machinery. This Homo sapiens (Human) protein is Protein P.